A 569-amino-acid chain; its full sequence is Atlastin-2 (569 aa).

The interval 1 to 49 (MAEGGSLRNRTRFGSRSNEAMNHVDYPDENFVEEIQLNSDTEVMEKPRP) is N-terminal hypervariable region (HVR). Over 1-464 (MAEGGSLRNR…NIFYAARTPA (464 aa)) the chain is Cytoplasmic. In terms of domain architecture, GB1/RHD3-type G spans 80 to 324 (DLNVVVLSVA…LVPLLLAPEN (245 aa)). Arg-93, Lys-94, Gly-95, Lys-96, Ser-97, Phe-98, Gln-163, Arg-232, and Asp-233 together coordinate GDP. Arg-93, Lys-94, Gly-95, Lys-96, Ser-97, and Phe-98 together coordinate GTP. Ser-97 provides a ligand contact to Mg(2+). GTP contacts are provided by Arg-232 and Asp-233. Residues 244–272 (LEGGNKFLEKRLQVKQNQHEELQNVRKHI) adopt a coiled-coil conformation. 2 residues coordinate GDP: Val-291 and Asn-294. Val-291 contributes to the GTP binding site. Residues 362 to 453 (MLQATAEANN…YANFLKHNDG (92 aa)) are 3HB (three-helix bundle) domain. Residues 454-462 (KNIFYAART) are linker. The helical transmembrane segment at 465–485 (TLFAVMFAMYIISGLTGFIGM) threads the bilayer. At 486-487 (NS) the chain is on the lumenal side. The chain crosses the membrane as a helical span at residues 488–508 (IATICNLIMGLTLLSFCTWAY). Topologically, residues 509–569 (VKYSGEFREL…DQVSGRLKTN (61 aa)) are cytoplasmic. An autoinhibitory domain region spans residues 535 to 569 (KPLSDNLMEDNIRQTVRNSIKAGLTDQVSGRLKTN).

This sequence belongs to the TRAFAC class dynamin-like GTPase superfamily. GB1/RHD3 GTPase family. GB1 subfamily. As to quaternary structure, monomeric and homodimeric. The homodimer, transiently formed by two molecules on opposing membranes, is the active form mediating ER membrane fusion.

The protein resides in the endoplasmic reticulum membrane. It catalyses the reaction GTP + H2O = GDP + phosphate + H(+). In terms of biological role, atlastin-2 (ATL2) is a membrane-anchored GTPase that mediates the GTP-dependent fusion of endoplasmic reticulum (ER) membranes, maintaining the continuous ER network. It facilitates the formation of three-way junctions where ER tubules intersect. Two atlastin-2 on neighboring ER tubules bind GTP and form loose homodimers through the GB1/RHD3-type G domains and 3HB regions. Upon GTP hydrolysis, the 3HB regions tighten, pulling the membranes together to drive their fusion. After fusion, the homodimer disassembles upon release of inorganic phosphate (Pi). Subsequently, GDP dissociates, resetting the monomers to a conformation ready for a new fusion cycle. The polypeptide is Atlastin-2 (atl2) (Xenopus laevis (African clawed frog)).